Reading from the N-terminus, the 522-residue chain is MSEFLPQRDWTVIVGSGMAGLMAAMTLAPQPVLLVTRGALGGETSSAWAQGGIAASLGPDDRAALHVADTLAAGDGLCDEDMVVGIVSSAPAVIDALERAGVRFDRDAGGNYVFGLEAAHSRRRILHAEGDGSGAAIVRALTDAVRRTPSITVLEGTEVRRLLTEDSVIAGLACAGPNGSFLLPASQVILATGGLGGLYDATTNPSGNFGQGIMLAARAGAILADMEFVQFHPTALSSPRRPLALVSEAVRGEGALLLNENGERFMAAVPGAELASRDIVARAIDREILRGGQVFLDARQALGSGFASRFPSIDLLCREAGIDPARELVPVRPAVHYHMGGVATDNKGRSSVRGLWVAGETACTGLHGANRLASNSLLEAAAMGMRAAQDIAGRPAPAARSAAAVSPNATADFSPADLAAVRPIVSRHLGIVRHAAGLAEAIRDLLPLAERNGPASDPAVVALSIAVFAALRRESRGAHFRDDFSQKDAKAMRRRLSLNDVVTVAHEFSSSSLATAGFARSA.

FAD is bound by residues 16 to 19 (SGMA) and 45 to 52 (SSAWAQGG). Residue Arg-277 is the Proton donor/acceptor of the active site. FAD-binding positions include Glu-360 and 376 to 377 (SL).

Belongs to the FAD-dependent oxidoreductase 2 family. NadB subfamily. FAD serves as cofactor.

The protein localises to the cytoplasm. The catalysed reaction is L-aspartate + O2 = iminosuccinate + H2O2. Its pathway is cofactor biosynthesis; NAD(+) biosynthesis; iminoaspartate from L-aspartate (oxidase route): step 1/1. In terms of biological role, catalyzes the oxidation of L-aspartate to iminoaspartate, the first step in the de novo biosynthesis of NAD(+). The polypeptide is L-aspartate oxidase (nadB) (Agrobacterium fabrum (strain C58 / ATCC 33970) (Agrobacterium tumefaciens (strain C58))).